The sequence spans 128 residues: Small ribosomal subunit protein eS6 (128 aa).

Belongs to the eukaryotic ribosomal protein eS6 family.

The chain is Small ribosomal subunit protein eS6 from Thermoplasma volcanium (strain ATCC 51530 / DSM 4299 / JCM 9571 / NBRC 15438 / GSS1).